The sequence spans 126 residues: Glycine cleavage system H protein (126 aa).

A Lipoyl-binding domain is found at 21-103 (TVTIGISEHA…YEGGWIVKVK (83 aa)). An N6-lipoyllysine modification is found at Lys-62.

It belongs to the GcvH family. The glycine cleavage system is composed of four proteins: P, T, L and H. The cofactor is (R)-lipoate.

Functionally, the glycine cleavage system catalyzes the degradation of glycine. The H protein shuttles the methylamine group of glycine from the P protein to the T protein. This chain is Glycine cleavage system H protein, found in Vibrio vulnificus (strain CMCP6).